We begin with the raw amino-acid sequence, 276 residues long: Radial spoke head protein 9 homolog (276 aa).

This sequence belongs to the flagellar radial spoke RSP9 family. In terms of assembly, component of the axonemal radial spoke 1 (RS1) and 2 (RS2) complexes, at least composed of spoke head proteins RSPH1, RSPH3, RSPH9 and the cilia-specific component RSPH4A or sperm-specific component RSPH6A, spoke stalk proteins RSPH14, DNAJB13, DYDC1, ROPN1L and NME5, and the RS1 complex-specific anchor protein IQUB. Interacts with IQUB. Interacts with RSPH3B. Interacts with RSPH4A. Interacts with RSPH6A. Interacts with CFAP61. Interacts with LRRC23.

It localises to the cytoplasm. The protein resides in the cytoskeleton. The protein localises to the cilium axoneme. Its subcellular location is the flagellum axoneme. It is found in the cell projection. It localises to the kinocilium. In terms of biological role, functions as part of axonemal radial spoke complexes that play an important part in the motility of sperm and cilia. Essential for both the radial spoke head assembly and the central pair microtubule stability in ependymal motile cilia. Required for motility of olfactory and neural cilia and for the structural integrity of ciliary axonemes in both 9+0 and 9+2 motile cilia. The protein is Radial spoke head protein 9 homolog (RSPH9) of Homo sapiens (Human).